The sequence spans 167 residues: Ribosome maturation factor RimM (167 aa).

The region spanning 92-165 (EDTYYIADII…RITIDPIEGM (74 aa)) is the PRC barrel domain.

This sequence belongs to the RimM family. In terms of assembly, binds ribosomal protein uS19.

The protein resides in the cytoplasm. An accessory protein needed during the final step in the assembly of 30S ribosomal subunit, possibly for assembly of the head region. Essential for efficient processing of 16S rRNA. May be needed both before and after RbfA during the maturation of 16S rRNA. It has affinity for free ribosomal 30S subunits but not for 70S ribosomes. This Alkaliphilus oremlandii (strain OhILAs) (Clostridium oremlandii (strain OhILAs)) protein is Ribosome maturation factor RimM.